A 466-amino-acid polypeptide reads, in one-letter code: MAKNRRDRGTDLPGDGDQKISTGPEIVSVTVHPSPNLAAAAKPVQGDIWASLLESSPWSANQGGLVETAQPPSAPIRSQDPVPVADLVNRWSQPIWRTAPLAGNAESSEEGVVAPSLTQSDSVLAVSDLVIDVQPETDAEVEVSIEPEPALVEPVIEIEAEAAEVEPEPAPVADLVNRWAQPIWRTAPLAGNAESSEEGVVAPSLTQSDSVLAVSDLVIDVQPEANAEVEVSIEPEPALVEPVIEIEAEAAEVEPEPAPVEPVIEIEAEAAEVEPEPAPVEPVIEIEAEAAEVEPEPAPVEPAIEIEAIRVELEPVLIDEVVELVTEFEYSQAESVASADLIANPAPAESSRLAELLDEAAAIAAPAVAVAVEATRQPNKITASVKKRAPVQEVPVEDLLGGIFGVAGSAVRGVFTIGGGFVDGVVKGGRLVGSNVVAGTRRLAQTIEVSCGSCSSPKCDAEDKNK.

Disordered stretches follow at residues 1–23 (MAKNRRDRGTDLPGDGDQKISTG) and 60–80 (ANQGGLVETAQPPSAPIRSQD). The interval 1-24 (MAKNRRDRGTDLPGDGDQKISTGP) is not required to restore magnetic response to deletion mutant. A required to restore magnetic response to deletion mutant region spans residues 25–80 (EIVSVTVHPSPNLAAAAKPVQGDIWASLLESSPWSANQGGLVETAQPPSAPIRSQD). Tandem repeat unit repeat units lie at residues 81–168 (PVPV…VEPE) and 169–256 (PAPV…VEPE). Not required to restore magnetic response to deletion mutant stretches follow at residues 81 to 256 (PVPV…VEPE), 136 to 334 (ETDA…SQAE), 333 to 374 (AESV…AVEA), and 432 to 466 (VGSNVVAGTRRLAQTIEVSCGSCSSPKCDAEDKNK). Glu-Pro-rich motif repeat units follow at residues 145–164 (IEPEPALVEPVIEIEAEAAE), 233–252 (IEPEPALVEPVIEIEAEAAE), and 253–272 (VEPEPAPVEPVIEIEAEAAE). 2 required to restore magnetic response to deletion mutant regions span residues 375–432 (TRQP…GRLV) and 426–466 (VKGG…DKNK).

Belongs to the magnetosome MamJ protein family. As to quaternary structure, forms homooligomers. Interacts with MamK. In terms of processing, identified by N-terminal sequencing of a protein that is about 96 kDa in size. The protein runs anomalously on protein gels.

Its subcellular location is the magnetosome. Functionally, required for assembly of magnetosome chains. Regulates the dynamic behavior of MamK filaments. May connect magnetosomes to MamK filaments. Moves from the cell poles towards midcell; movement does not depend on the treadmilling ability of MamK, suggesting MamJ associates and disassociates continuously from the MamK filament. This chain is Magnetosome-associated protein MamJ, found in Magnetospirillum gryphiswaldense (strain DSM 6361 / JCM 21280 / NBRC 15271 / MSR-1).